The following is a 344-amino-acid chain: Probable nicotinate-nucleotide adenylyltransferase/Ap4A hydrolase (344 aa).

The naMN adenylyltransferase stretch occupies residues 1–182; that stretch reads MIFGGAFDPL…YIHQHNIYLK (182 aa). Positions 191–344 are ap4A hydrolase; it reads EPRMQHCLRV…LKYVRSLQKN (154 aa). The 112-residue stretch at 193-304 folds into the HD domain; the sequence is RMQHCLRVGQ…IYLADKLEPM (112 aa). Histidine 196 serves as a coordination point for ADP. Fe cation-binding residues include histidine 196, histidine 225, and aspartate 226. Residues 226 to 229, histidine 255, 281 to 282, aspartate 299, and arginine 305 each bind ADP; these read DLAK and HT. Fe cation is bound at residue aspartate 299.

This sequence in the N-terminal section; belongs to the NadD family. It in the C-terminal section; belongs to the Ap4A hydrolase YqeK family.

The enzyme catalyses nicotinate beta-D-ribonucleotide + ATP + H(+) = deamido-NAD(+) + diphosphate. The catalysed reaction is P(1),P(4)-bis(5'-adenosyl) tetraphosphate + H2O = 2 ADP + 2 H(+). The protein operates within cofactor biosynthesis; NAD(+) biosynthesis; deamido-NAD(+) from nicotinate D-ribonucleotide: step 1/1. In terms of biological role, catalyzes the reversible adenylation of nicotinate mononucleotide (NaMN) to nicotinic acid adenine dinucleotide (NaAD). Hydrolyzes diadenosine 5',5'''-P1,P4-tetraphosphate (Ap4A) to yield ADP. This Mycoplasma pneumoniae (strain ATCC 29342 / M129 / Subtype 1) (Mycoplasmoides pneumoniae) protein is Probable nicotinate-nucleotide adenylyltransferase/Ap4A hydrolase.